We begin with the raw amino-acid sequence, 91 residues long: MAHKKSGGSSRNGRDSAGRRLGVKKFGGEAINAGGIIVRQRGTKFWPGENVGMGKDHTLFALATGAVKFVTKRDNRTYATVVPANEVMAAE.

Positions Met1–Leu21 are disordered.

Belongs to the bacterial ribosomal protein bL27 family.

In Phenylobacterium zucineum (strain HLK1), this protein is Large ribosomal subunit protein bL27.